A 609-amino-acid chain; its full sequence is Putative cell agglutination protein pfl4 (609 aa).

The signal sequence occupies residues 1-21 (MLFLRFFIFTFFTSIFTVVVS). Asn75 carries N-linked (GlcNAc...) asparagine glycosylation. The tract at residues 75-391 (NHSTIYTTIN…ASTVVVIPTA (317 aa)) is 9 X 36 AA approximate tandem repeats. Tandem repeats lie at residues 77–110 (STIYTTINSGTVASTYTVTLADGDVVVKDIEPTA), 111–146 (GTVTTTITSGSHEFTTTLAEASGTVPGTVEVVEPLA), 147–182 (GTVTTTIHSGSVEYNTTLATASGTVPGTVEVVEPAV), 183–218 (GTVTTTIYSGSEEFTTTLASASGSISGTVEVIEPTA), 219–254 (GTVTTTIYSGDQEYTTILAEASGTVPGTVEVIEPAV), 255–290 (GTVTTTTYSGSVEYTTTLVPASGSVSGTVEVVEPAV), 291–325 (GTVTTTLQSGSQAFTTTVPASGSVSGTVEVVQPTG), 326–361 (GTVTNTVYEGSQTITSTLATASGTVPGTVEVILPGP), and 362–391 (STIYSGTVATTITYDVSSTPASTVVVIPTA). Asn161 is a glycosylation site (N-linked (GlcNAc...) asparagine). A PA14 domain is found at 427–589 (FTQPAYFGSS…NSYNPTSYAY (163 aa)).

It belongs to the mam3/map4 family.

The protein localises to the cell surface. May be involved in agglutination during conjugation or other aspects of colony formation. Induces flocculation when overexpressed. This Schizosaccharomyces pombe (strain 972 / ATCC 24843) (Fission yeast) protein is Putative cell agglutination protein pfl4.